The primary structure comprises 213 residues: N-(5'-phosphoribosyl)anthranilate isomerase (213 aa).

It belongs to the TrpF family.

It catalyses the reaction N-(5-phospho-beta-D-ribosyl)anthranilate = 1-(2-carboxyphenylamino)-1-deoxy-D-ribulose 5-phosphate. Its pathway is amino-acid biosynthesis; L-tryptophan biosynthesis; L-tryptophan from chorismate: step 3/5. The polypeptide is N-(5'-phosphoribosyl)anthranilate isomerase (Roseiflexus sp. (strain RS-1)).